The following is a 330-amino-acid chain: Succinylglutamate desuccinylase (330 aa).

Positions 53, 56, and 147 each coordinate Zn(2+). The active site involves E210.

It belongs to the AspA/AstE family. Succinylglutamate desuccinylase subfamily. The cofactor is Zn(2+).

The enzyme catalyses N-succinyl-L-glutamate + H2O = L-glutamate + succinate. It functions in the pathway amino-acid degradation; L-arginine degradation via AST pathway; L-glutamate and succinate from L-arginine: step 5/5. Functionally, transforms N(2)-succinylglutamate into succinate and glutamate. The sequence is that of Succinylglutamate desuccinylase from Yersinia pseudotuberculosis serotype O:1b (strain IP 31758).